The following is a 224-amino-acid chain: Oocyte zinc finger protein XlCOF6.1 (224 aa).

C2H2-type zinc fingers lie at residues 6–28 (FSCSVCGKCFALKTELTIHCRSH), 34–56 (FHCTECGKYFQHRSNLRRHQRYH), 62–84 (FTCFECGTCFVNYSWLMLHIRMH), 90–112 (FSCSECGKRFARRSVLEAHQKIH), 118–140 (FSCSECGKGFIKQCDLARHYRTH), 146–168 (FPCPECGKCFTQSMQLIRHRRTH), 174–196 (FACSECGKCFAQNSHLTQHRLGH), and 202–224 (FSCSECGKCFSRRSHLIAHLKSH).

Belongs to the krueppel C2H2-type zinc-finger protein family.

It localises to the nucleus. Functionally, may be involved in transcriptional regulation. This is Oocyte zinc finger protein XlCOF6.1 from Xenopus laevis (African clawed frog).